Here is a 329-residue protein sequence, read N- to C-terminus: D-lactate dehydrogenase (329 aa).

Residues 154 to 155, D174, 205 to 206, N211, 232 to 234, and D258 contribute to the NAD(+) site; these read KI, CP, and TSR. The active site involves R234. E263 is an active-site residue. The Proton donor role is filled by H295.

This sequence belongs to the D-isomer specific 2-hydroxyacid dehydrogenase family.

The catalysed reaction is (R)-lactate + NAD(+) = pyruvate + NADH + H(+). Its function is as follows. Fermentative lactate dehydrogenase. The chain is D-lactate dehydrogenase (ldhA) from Escherichia coli (strain K12).